The sequence spans 525 residues: GMP synthase [glutamine-hydrolyzing] (525 aa).

The region spanning 8 to 207 is the Glutamine amidotransferase type-1 domain; the sequence is KILILDFGSQ…ALDICGCAAN (200 aa). Cys85 serves as the catalytic Nucleophile. Active-site residues include His181 and Glu183. Positions 208 to 400 constitute a GMPS ATP-PPase domain; the sequence is WKPSSIIEDA…LGLPYNMLYR (193 aa). 235-241 is a binding site for ATP; sequence SGGVDSS.

Homodimer.

The enzyme catalyses XMP + L-glutamine + ATP + H2O = GMP + L-glutamate + AMP + diphosphate + 2 H(+). It functions in the pathway purine metabolism; GMP biosynthesis; GMP from XMP (L-Gln route): step 1/1. Its function is as follows. Catalyzes the synthesis of GMP from XMP. This chain is GMP synthase [glutamine-hydrolyzing], found in Shewanella sp. (strain ANA-3).